The sequence spans 732 residues: Subtilisin-like protease SBT4.13 (732 aa).

An N-terminal signal peptide occupies residues 1–24; the sequence is MATLAASSSLLSCLLVLFLSSVSA. A propeptide spans 25-109 (activation peptide); sequence VTDDKQVYIV…VFPNKKLQLQ (85 aa). Residues 31–108 form the Inhibitor I9 domain; sequence VYIVYMGSLS…SVFPNKKLQL (78 aa). The Peptidase S8 domain maps to 113–579; that stretch reads SWDFMGLKEG…SGHVDPIAAS (467 aa). Asp141 serves as the catalytic Charge relay system. A glycan (N-linked (GlcNAc...) asparagine) is linked at Asn172. His196 acts as the Charge relay system in catalysis. The N-linked (GlcNAc...) asparagine glycan is linked to Asn219. The 85-residue stretch at 352 to 436 folds into the PA domain; the sequence is DYPLVYGKSA…GLLTEDFESL (85 aa). Asn458 carries an N-linked (GlcNAc...) asparagine glycan. Ser518 (charge relay system) is an active-site residue. N-linked (GlcNAc...) asparagine glycosylation is found at Asn555, Asn600, Asn648, and Asn658.

This sequence belongs to the peptidase S8 family. In terms of processing, the C-terminal propeptide is autocleaved.

Its subcellular location is the secreted. This Arabidopsis thaliana (Mouse-ear cress) protein is Subtilisin-like protease SBT4.13.